Consider the following 414-residue polypeptide: Isocitrate dehydrogenase [NADP] cytoplasmic (414 aa).

An N-acetylserine modification is found at serine 2. Tyrosine 42 carries the phosphotyrosine modification. 75–77 (TIT) provides a ligand contact to NADP(+). Residue threonine 77 participates in substrate binding. At lysine 81 the chain carries N6-acetyllysine. Arginine 82 lines the NADP(+) pocket. Residues 94–100 (SPNGTIR) and arginine 109 contribute to the substrate site. Lysine 126 bears the N6-succinyllysine mark. The substrate site is built by arginine 132 and lysine 212. N6-acetyllysine is present on residues lysine 224, lysine 233, and lysine 243. Position 252 (aspartate 252) interacts with Mn(2+). Lysine 260 provides a ligand contact to NADP(+). The Mn(2+) site is built by aspartate 275 and aspartate 279. 310–315 (GTVTRH) contacts NADP(+). At lysine 321 the chain carries N6-acetyllysine. Asparagine 328 contacts NADP(+). Residue serine 389 is modified to Phosphoserine. Position 400 is an N6-succinyllysine (lysine 400).

It belongs to the isocitrate and isopropylmalate dehydrogenases family. Homodimer. Mg(2+) is required as a cofactor. Requires Mn(2+) as cofactor. Post-translationally, acetylation at Lys-374 dramatically reduces catalytic activity.

It localises to the cytoplasm. It is found in the cytosol. The protein resides in the peroxisome. The catalysed reaction is D-threo-isocitrate + NADP(+) = 2-oxoglutarate + CO2 + NADPH. In terms of biological role, catalyzes the NADP(+)-dependent oxidative decarboxylation of isocitrate (D-threo-isocitrate) to 2-ketoglutarate (2-oxoglutarate), which is required by other enzymes such as the phytanoyl-CoA dioxygenase. Plays a critical role in the generation of NADPH, an important cofactor in many biosynthesis pathways. May act as a corneal epithelial crystallin and may be involved in maintaining corneal epithelial transparency. The sequence is that of Isocitrate dehydrogenase [NADP] cytoplasmic (IDH1) from Homo sapiens (Human).